A 1242-amino-acid chain; its full sequence is Structural polyprotein (1242 aa).

Residues 1 to 36 are necessary for nucleocapsid assembly and virus assembly; that stretch reads MFPYPTLNYSPMAPVNPMAYRDPNPPRRRWRPFRPP. Positions 1–104 are disordered; sequence MFPYPTLNYS…KQKPGKRQRM (104 aa). Positions 37–70 are host transcription inhibition; sequence LAAQIEDLRRSIANLTFKQRAPNPPAGPPAKRKK. The Supraphysiological nuclear export signal signature appears at 44–51; sequence LRRSIANL. A compositionally biased stretch (basic residues) spans 66 to 104; the sequence is AKRKKPAPKPKPAAPKKKRQPPPAKKQKRKQKPGKRQRM. The Nuclear localization signal motif lies at 67 to 70; sequence KRKK. Positions 83–113 are binding to the viral RNA; sequence KRQPPPAKKQKRKQKPGKRQRMCMKLESDKT. The tract at residues 98 to 112 is ribosome-binding; sequence PGKRQRMCMKLESDK. S110 bears the Phosphoserine mark. In terms of domain architecture, Peptidase S3 spans 112–261; sequence KTFPILLNGQ…KDTPEGSEPW (150 aa). The residue at position 113 (T113) is a Phosphothreonine. Residues H138, D160, and S212 each act as charge relay system in the active site. The tract at residues 262–273 is functions as an uncleaved signal peptide for the precursor of protein E3/E2; the sequence is SLTTVMCVLANI. Residue N272 is glycosylated (N-linked (GlcNAc...) asparagine; by host). Over 325 to 688 the chain is Extracellular; the sequence is DLETHFTQYK…YYYNRYPMTT (364 aa). A helical membrane pass occupies residues 689 to 709; it reads IVGLCTCAAIIMVSCITSVWL. At 710-744 the chain is on the cytoplasmic side; it reads LCRTRNLCITPYRLAPNAQVPILLAVLCCVKPTRA. S-palmitoyl cysteine; by host attachment occurs at residues C717, C737, and C738. A transient transmembrane before p62-6K protein processing region spans residues 717–737; it reads CITPYRLAPNAQVPILLAVLC. Topologically, residues 745-759 are extracellular; the sequence is DDTLQVLNYLWNNNQ. 2 helical membrane-spanning segments follow: residues 760–780 and 781–801; these read NFFW…MRML and RCLL…GAAA. The Extracellular segment spans residues 802-1218; sequence YEHTAVMPNK…WSWLKVLVGS (417 aa). Cystine bridges form between C850–C915, C863–C895, C864–C897, C869–C879, C1061–C1073, C1103–C1178, C1108–C1182, and C1130–C1172. The tract at residues 885 to 902 is E1 fusion peptide loop; sequence VYPFMWGGAYCFCDTENT. A helical transmembrane segment spans residues 1219–1239; the sequence is TSAFIVLGLIATAVVALVLFT. Residues 1240 to 1242 are Cytoplasmic-facing; it reads HKH.

Part of a tetrameric complex composed of host CRM1, host importin alpha/beta dimer and the viral capsid; this complex blocks the receptor-mediated transport through the nuclear pore. Interacts with host phosphatase PPP1CA; this interaction dephosphorylates the capsid protein, which increases its ability to bind to the viral genome. Interacts with host karyopherin KPNA4; this interaction allows the nuclear import of the viral capsid protein. Interacts with spike glycoprotein E2. Interacts with host IRAK1; the interaction leads to inhibition of IRAK1-dependent signaling. As to quaternary structure, the precursor of protein E3/E2 and E1 form a heterodimer shortly after synthesis. In terms of assembly, the precursor of protein E3/E2 and E1 form a heterodimer shortly after synthesis. Processing of the precursor of protein E3/E2 into E2 and E3 results in a heterodimer of the spike glycoproteins E2 and E1. Spike at virion surface are constituted of three E2-E1 heterodimers. After target cell attachment and endocytosis, E1 change conformation to form homotrimers. Interacts with 6K protein. Processing of the precursor of protein E3/E2 into E2 and E3 results in a heterodimer of the spike glycoproteins E2 and E1. Spike at virion surface are constituted of three E2-E1 heterodimers. Interacts with 6K protein. As to quaternary structure, interacts with spike glycoprotein E1. Interacts with spike glycoprotein E2. In terms of processing, structural polyprotein: Specific enzymatic cleavages in vivo yield mature proteins. Capsid protein is auto-cleaved during polyprotein translation, unmasking a signal peptide at the N-terminus of the precursor of E3/E2. The remaining polyprotein is then targeted to the host endoplasmic reticulum, where host signal peptidase cleaves it into pE2, 6K and E1 proteins. pE2 is further processed to mature E3 and E2 by host furin in trans-Golgi vesicle. Phosphorylated on serine and threonine residues. Post-translationally, palmitoylated via thioester bonds. These palmitoylations may induce disruption of the C-terminus transmembrane. This would result in the reorientation of E2 C-terminus from lumenal to cytoplasmic side. In terms of processing, N-glycosylated. Palmitoylated via thioester bonds.

Its subcellular location is the virion. It is found in the host cytoplasm. The protein localises to the host cell membrane. The protein resides in the host nucleus. It localises to the virion membrane. It carries out the reaction Autocatalytic release of the core protein from the N-terminus of the togavirus structural polyprotein by hydrolysis of a -Trp-|-Ser- bond.. Forms an icosahedral capsid with a T=4 symmetry composed of 240 copies of the capsid protein surrounded by a lipid membrane through which penetrate 80 spikes composed of trimers of E1-E2 heterodimers. The capsid protein binds to the viral RNA genome at a site adjacent to a ribosome binding site for viral genome translation following genome release. Possesses a protease activity that results in its autocatalytic cleavage from the nascent structural protein. Following its self-cleavage, the capsid protein transiently associates with ribosomes, and within several minutes the protein binds to viral RNA and rapidly assembles into icosahedric core particles. The resulting nucleocapsid eventually associates with the cytoplasmic domain of the spike glycoprotein E2 at the cell membrane, leading to budding and formation of mature virions. In case of infection, new virions attach to target cells and after clathrin-mediated endocytosis their membrane fuses with the host endosomal membrane. This leads to the release of the nucleocapsid into the cytoplasm, followed by an uncoating event necessary for the genomic RNA to become accessible. The uncoating might be triggered by the interaction of capsid proteins with ribosomes. Binding of ribosomes would release the genomic RNA since the same region is genomic RNA-binding and ribosome-binding. Specifically inhibits interleukin-1 receptor-associated kinase 1/IRAK1-dependent signaling during viral entry, representing a means by which the alphaviruses may evade innate immune detection and activation prior to viral gene expression. Inhibits host transcription. Forms a tetrameric complex with XPO1/CRM1 and the nuclear import receptor importin. This complex blocks the central channel of host nuclear pores thereby inhibiting the receptor-mediated nuclear transport and thus the host mRNA and rRNA transcription. The inhibition of transcription is linked to a cytopathic effect on the host cell. Functionally, provides the signal sequence for the translocation of the precursor of protein E3/E2 to the host endoplasmic reticulum. Furin-cleaved E3 remains associated with spike glycoprotein E1 and mediates pH protection of the latter during the transport via the secretory pathway. After virion release from the host cell, the assembly protein E3 is gradually released in the extracellular space. In terms of biological role, plays a role in viral attachment to target host cell, by binding to the cell receptor. Synthesized as a p62 precursor which is processed by furin at the cell membrane just before virion budding, giving rise to E2-E1 heterodimer. The p62-E1 heterodimer is stable, whereas E2-E1 is unstable and dissociate at low pH. p62 is processed at the last step, presumably to avoid E1 fusion activation before its final export to cell surface. E2 C-terminus contains a transitory transmembrane that would be disrupted by palmitoylation, resulting in reorientation of the C-terminal tail from lumenal to cytoplasmic side. This step is critical since E2 C-terminus is involved in budding by interacting with capsid proteins. This release of E2 C-terminus in cytoplasm occurs lately in protein export, and precludes premature assembly of particles at the endoplasmic reticulum membrane. Its function is as follows. Constitutive membrane protein involved in virus glycoprotein processing, cell permeabilization, and the budding of viral particles. Disrupts the calcium homeostasis of the cell, probably at the endoplasmic reticulum level. This leads to cytoplasmic calcium elevation. Because of its lipophilic properties, the 6K protein is postulated to influence the selection of lipids that interact with the transmembrane domains of the glycoproteins, which, in turn, affects the deformability of the bilayer required for the extreme curvature that occurs as budding proceeds. Present in low amount in virions, about 3% compared to viral glycoproteins. Class II viral fusion protein. Fusion activity is inactive as long as E1 is bound to E2 in mature virion. After virus attachment to target cell and endocytosis, acidification of the endosome would induce dissociation of E1/E2 heterodimer and concomitant trimerization of the E1 subunits. This E1 trimer is fusion active, and promotes release of viral nucleocapsid in cytoplasm after endosome and viral membrane fusion. Efficient fusion requires the presence of cholesterol and sphingolipid in the target membrane. Fusion is optimal at levels of about 1 molecule of cholesterol per 2 molecules of phospholipids, and is specific for sterols containing a 3-beta-hydroxyl group. This Aedes (Human) protein is Structural polyprotein.